We begin with the raw amino-acid sequence, 191 residues long: Protein YceI (191 aa).

The first 22 residues, M1 to A22, serve as a signal peptide directing secretion.

Belongs to the UPF0312 family. Type 1 subfamily.

It is found in the periplasm. The chain is Protein YceI from Shigella boydii serotype 4 (strain Sb227).